Here is a 656-residue protein sequence, read N- to C-terminus: Protein teflon (656 aa).

The C2H2-type 1 zinc-finger motif lies at 33–56; it reads LYCHFCRDLFTQLPEFLRHLQSNH. The interval 80–131 is disordered; it reads DKAHEDAQSAGHNSSSGDSRSLMNSEDSRAIDGSEENSDNSPVKPEQIGKQN. Residues 89 to 104 show a composition bias toward polar residues; that stretch reads AGHNSSSGDSRSLMNS. C2H2-type zinc fingers lie at residues 606 to 628 and 632 to 655; these read YFCK…LISH and FQCT…RNAH.

The protein belongs to the Teflon family.

The protein localises to the nucleus. The protein resides in the chromosome. Functionally, specifically required in males for proper segregation of autosomal bivalents at meiosis I. Expression is required in the male germ line prior to spermatocyte stage S4. May have a role as a bridging molecule maintaining adhesion to hold autosome bivalents together via heterochromatic connections. The polypeptide is Protein teflon (Drosophila sechellia (Fruit fly)).